The sequence spans 194 residues: Anthranilate synthase component 2 (194 aa).

Positions 2–194 (KIFFIDNFDS…QSVGFLEGLL (193 aa)) constitute a Glutamine amidotransferase type-1 domain. Residue 57-59 (GPG) participates in L-glutamine binding. The active-site Nucleophile; for GATase activity is the Cys84. Residues Gln88 and 134 to 135 (SL) each bind L-glutamine. Active-site for GATase activity residues include His170 and Glu172.

As to quaternary structure, heterotetramer consisting of two non-identical subunits: a beta subunit (TrpG) and a large alpha subunit (TrpE).

It catalyses the reaction chorismate + L-glutamine = anthranilate + pyruvate + L-glutamate + H(+). It participates in amino-acid biosynthesis; L-tryptophan biosynthesis; L-tryptophan from chorismate: step 1/5. Functionally, part of a heterotetrameric complex that catalyzes the two-step biosynthesis of anthranilate, an intermediate in the biosynthesis of L-tryptophan. In the first step, the glutamine-binding beta subunit (TrpG) of anthranilate synthase (AS) provides the glutamine amidotransferase activity which generates ammonia as a substrate that, along with chorismate, is used in the second step, catalyzed by the large alpha subunit of AS (TrpE) to produce anthranilate. In the absence of TrpG, TrpE can synthesize anthranilate directly from chorismate and high concentrations of ammonia. This Helicobacter pylori (strain ATCC 700392 / 26695) (Campylobacter pylori) protein is Anthranilate synthase component 2 (trpG).